A 226-amino-acid chain; its full sequence is Ribonuclease 3 (226 aa).

The RNase III domain occupies 6-128; it reads INRLQRKLGY…LIGGVFLDSD (123 aa). E41 contributes to the Mg(2+) binding site. The active site involves D45. Residues D114 and E117 each contribute to the Mg(2+) site. E117 is an active-site residue. In terms of domain architecture, DRBM spans 155–225; it reads DPKTRLQEYL…AEQALKMLEL (71 aa).

It belongs to the ribonuclease III family. In terms of assembly, homodimer. It depends on Mg(2+) as a cofactor.

Its subcellular location is the cytoplasm. The catalysed reaction is Endonucleolytic cleavage to 5'-phosphomonoester.. Functionally, digests double-stranded RNA. Involved in the processing of primary rRNA transcript to yield the immediate precursors to the large and small rRNAs (23S and 16S). Processes some mRNAs, and tRNAs when they are encoded in the rRNA operon. Processes pre-crRNA and tracrRNA of type II CRISPR loci if present in the organism. In Enterobacter sp. (strain 638), this protein is Ribonuclease 3.